Reading from the N-terminus, the 149-residue chain is Transcription antitermination protein NusB (149 aa).

This sequence belongs to the NusB family.

Involved in transcription antitermination. Required for transcription of ribosomal RNA (rRNA) genes. Binds specifically to the boxA antiterminator sequence of the ribosomal RNA (rrn) operons. The chain is Transcription antitermination protein NusB from Hahella chejuensis (strain KCTC 2396).